The chain runs to 216 residues: uncharacterized protein (216 aa).

Helical transmembrane passes span 12-32, 48-68, 74-94, 134-154, 156-176, and 191-211; these read YVLGVVFVILLPGPNSLFVLA, GVFLGDAVLMLLSALGVASLL, LFIGLKYLGAAYLFYLGVGML, ILFFISFFIQFVDPGYAYPGL, FLVLAVILELVSALYLSFLIF, and LAAGATSGVGALFVGFGVKLA.

This sequence belongs to the Rht family.

The protein localises to the cell membrane. This is an uncharacterized protein from Pseudomonas aeruginosa (strain ATCC 15692 / DSM 22644 / CIP 104116 / JCM 14847 / LMG 12228 / 1C / PRS 101 / PAO1).